Here is a 302-residue protein sequence, read N- to C-terminus: tRNA pseudouridine synthase B (302 aa).

Asp42 (nucleophile) is an active-site residue.

It belongs to the pseudouridine synthase TruB family. Type 1 subfamily.

It carries out the reaction uridine(55) in tRNA = pseudouridine(55) in tRNA. Functionally, responsible for synthesis of pseudouridine from uracil-55 in the psi GC loop of transfer RNAs. This chain is tRNA pseudouridine synthase B, found in Leifsonia xyli subsp. xyli (strain CTCB07).